We begin with the raw amino-acid sequence, 193 residues long: Probable nicotinate-nucleotide adenylyltransferase (193 aa).

Belongs to the NadD family.

It catalyses the reaction nicotinate beta-D-ribonucleotide + ATP + H(+) = deamido-NAD(+) + diphosphate. It functions in the pathway cofactor biosynthesis; NAD(+) biosynthesis; deamido-NAD(+) from nicotinate D-ribonucleotide: step 1/1. Functionally, catalyzes the reversible adenylation of nicotinate mononucleotide (NaMN) to nicotinic acid adenine dinucleotide (NaAD). This is Probable nicotinate-nucleotide adenylyltransferase from Borreliella afzelii (strain PKo) (Borrelia afzelii).